We begin with the raw amino-acid sequence, 628 residues long: E3 SUMO-protein ligase PIAS3 (628 aa).

The segment at 1-200 (MAELGELKHM…QLRFCLCETS (200 aa)) is interaction with CCAR2. Residues 11–45 (VMSFRVSELQVLLGFAGRNKSGRKHELLAKALHLL) enclose the SAP domain. The LXXLL motif signature appears at 19–23 (LQVLL). Residues Lys-46 and Lys-56 each participate in a glycyl lysine isopeptide (Lys-Gly) (interchain with G-Cter in SUMO2) cross-link. A disordered region spans residues 72-95 (PSDLSLLSLPPGTSPVGSPSPLAS). The PINIT domain maps to 115–280 (MHPPLPQPVH…SLSVYLVRQL (166 aa)). Residues Lys-230 and Lys-307 each participate in a glycyl lysine isopeptide (Lys-Gly) (interchain with G-Cter in SUMO2) cross-link. The SP-RING-type zinc finger occupies 312–393 (PDSEVATTSL…FMEILNSCSD (82 aa)). Zn(2+)-binding residues include Cys-343, His-345, Cys-366, and Cys-369. Positions 450 to 460 (LTIESSSDEED) are SUMO1-binding. Glycyl lysine isopeptide (Lys-Gly) (interchain with G-Cter in SUMO2) cross-links involve residues Lys-466 and Lys-482. Residues 573–618 (LAPTLGSSHRSATPAPAPGRVSSIVAPGSSLREGHGGPLPSGPSLT) are disordered.

This sequence belongs to the PIAS family. As to quaternary structure, binds SUMO1 and UBE2I. Interacts with AR, BCL11A, GFI1, HMGA2, IRF1, MITF, NCOA2, as well as with STAT3, after treatment with IL6, CNTF or OSM and with STAT5, after PRL stimulation. Interacts with PLAG1. Interacts with ZFHX3. Interacts with MTA1. Interacts with CCAR2 (via N-terminus). Interacts with TRIM8. Interacts with PRDM1. Post-translationally, sumoylated. As to expression, widely expressed, with highest levels in lung, kidney and spleen.

Its subcellular location is the cytoplasm. The protein resides in the nucleus. It localises to the nucleus speckle. It participates in protein modification; protein sumoylation. Functionally, functions as an E3-type small ubiquitin-like modifier (SUMO) ligase, stabilizing the interaction between UBE2I and the substrate, and as a SUMO-tethering factor. Plays a crucial role as a transcriptional coregulation in various cellular pathways, including the STAT pathway and the steroid hormone signaling pathway. The effects of this transcriptional coregulation, transactivation or silencing, may vary depending upon the biological context. Enhances the sumoylation of MTA1 and may participate in its paralog-selective sumoylation. Sumoylates CCAR2 which promotes its interaction with SIRT1. Diminishes the sumoylation of ZFHX3 by preventing the colocalization of ZFHX3 with SUMO1 in the nucleus. This chain is E3 SUMO-protein ligase PIAS3 (Pias3), found in Rattus norvegicus (Rat).